A 1338-amino-acid polypeptide reads, in one-letter code: Vascular endothelial growth factor receptor 1 (1338 aa).

The signal sequence occupies residues 1 to 26; sequence MVSYWDTGVLLCALLSCLLLTGSSSG. The Extracellular segment spans residues 27–758; sequence SKLKDPELSL…QGTSDKSNLE (732 aa). 7 Ig-like C2-type domains span residues 32–123, 151–214, 230–327, 335–421, 428–553, 556–654, and 661–747; these read PELS…TESA, GREL…VNGH, IDVQ…TSVH, TVKH…LTAT, PQIY…FYIT, PNGF…KEIT, and PYLL…AYLT. 2 disulfides stabilise this stretch: Cys53–Cys107 and Cys158–Cys207. 4 N-linked (GlcNAc...) asparagine glycosylation sites follow: Asn100, Asn164, Asn196, and Asn251. A disulfide bridge connects residues Cys252 and Cys311. 9 N-linked (GlcNAc...) asparagine glycosylation sites follow: Asn323, Asn402, Asn417, Asn474, Asn547, Asn597, Asn620, Asn625, and Asn666. A disulfide bridge links Cys454 with Cys535. Residues Cys577 and Cys636 are joined by a disulfide bond. A disulfide bond links Cys682 and Cys731. Residues 759 to 780 traverse the membrane as a helical segment; that stretch reads LITLTCTCVAATLFWLLLTLFI. Residues 781–1338 lie on the Cytoplasmic side of the membrane; the sequence is RKMKRSSSEI…SVVLYSTPPI (558 aa). The Protein kinase domain occupies 827 to 1158; it reads LKLGKSLGRG…ELVEKLGDLL (332 aa). ATP-binding positions include 833–841 and Lys861; that span reads LGRGAFGKV. A Phosphotyrosine; by autocatalysis modification is found at Tyr914. Residues 940-957 show a composition bias toward basic and acidic residues; that stretch reads PKKEKMEPGLEQGKKPRL. The tract at residues 940–982 is disordered; sequence PKKEKMEPGLEQGKKPRLDSVTSSESFASSGFQEDKSLSDVEE. Residues 959–971 show a composition bias toward polar residues; it reads SVTSSESFASSGF. Catalysis depends on Asp1022, which acts as the Proton acceptor. Phosphotyrosine; by autocatalysis is present on residues Tyr1053, Tyr1169, Tyr1213, Tyr1242, Tyr1309, Tyr1327, and Tyr1333.

This sequence belongs to the protein kinase superfamily. Tyr protein kinase family. CSF-1/PDGF receptor subfamily. In terms of assembly, interacts with VEGFA, VEGFB and PGF. Monomer in the absence of bound VEGFA, VEGFB or PGF. Homodimer in the presence of bound VEGFA, VEGFB and PGF. Can also form a heterodimer with KDR. Interacts (when tyrosine phosphorylated) with CBL, CRK, GRB2, NCK1, PIK3R1, PLCG, PSEN1 and PTPN11. Probably also interacts with PTPRB. Interacts with RACK1. Identified in a complex with CBL and CD2AP. N-glycosylated. Post-translationally, ubiquitinated after VEGFA-mediated autophosphorylation, leading to proteolytic degradation. In terms of processing, autophosphorylated on tyrosine residues upon ligand binding. Autophosphorylation occurs in trans, i.e. one subunit of the dimeric receptor phosphorylates tyrosine residues on the other subunit. Phosphorylation at Tyr-1169 is important for interaction with PLCG. Phosphorylation at Tyr-1213 is important for interaction with PIK3R1, PTPN11, GRB2, and PLCG. Phosphorylation at Tyr-1333 is important for endocytosis and for interaction with CBL, NCK1 and CRK. Is probably dephosphorylated by PTPRB. In terms of tissue distribution, detected in normal lung, but also in placenta, liver, kidney, heart and brain tissues. Specifically expressed in most of the vascular endothelial cells, and also expressed in peripheral blood monocytes. Isoform 2 is strongly expressed in placenta. Isoform 3 is expressed in corneal epithelial cells (at protein level). Isoform 3 is expressed in vascular smooth muscle cells (VSMC).

It localises to the cell membrane. Its subcellular location is the endosome. The protein localises to the secreted. The protein resides in the cytoplasm. It catalyses the reaction L-tyrosyl-[protein] + ATP = O-phospho-L-tyrosyl-[protein] + ADP + H(+). Present in an inactive conformation in the absence of bound ligand. Binding of VEGFA, VEGFB or PGF leads to dimerization and activation by autophosphorylation on tyrosine residues. Functionally, tyrosine-protein kinase that acts as a cell-surface receptor for VEGFA, VEGFB and PGF, and plays an essential role in the development of embryonic vasculature, the regulation of angiogenesis, cell survival, cell migration, macrophage function, chemotaxis, and cancer cell invasion. Acts as a positive regulator of postnatal retinal hyaloid vessel regression. May play an essential role as a negative regulator of embryonic angiogenesis by inhibiting excessive proliferation of endothelial cells. Can promote endothelial cell proliferation, survival and angiogenesis in adulthood. Its function in promoting cell proliferation seems to be cell-type specific. Promotes PGF-mediated proliferation of endothelial cells, proliferation of some types of cancer cells, but does not promote proliferation of normal fibroblasts (in vitro). Has very high affinity for VEGFA and relatively low protein kinase activity; may function as a negative regulator of VEGFA signaling by limiting the amount of free VEGFA and preventing its binding to KDR. Modulates KDR signaling by forming heterodimers with KDR. Ligand binding leads to the activation of several signaling cascades. Activation of PLCG leads to the production of the cellular signaling molecules diacylglycerol and inositol 1,4,5-trisphosphate and the activation of protein kinase C. Mediates phosphorylation of PIK3R1, the regulatory subunit of phosphatidylinositol 3-kinase, leading to activation of phosphatidylinositol kinase and the downstream signaling pathway. Mediates activation of MAPK1/ERK2, MAPK3/ERK1 and the MAP kinase signaling pathway, as well as of the AKT1 signaling pathway. Phosphorylates SRC and YES1, and may also phosphorylate CBL. Promotes phosphorylation of AKT1 at 'Ser-473'. Promotes phosphorylation of PTK2/FAK1. In terms of biological role, phosphorylates PLCG. Its function is as follows. May function as decoy receptor for VEGFA. Has a truncated kinase domain; it increases phosphorylation of SRC at 'Tyr-418' by unknown means and promotes tumor cell invasion. In Homo sapiens (Human), this protein is Vascular endothelial growth factor receptor 1 (FLT1).